A 75-amino-acid chain; its full sequence is Small ribosomal subunit protein bS16 (75 aa).

This sequence belongs to the bacterial ribosomal protein bS16 family.

In Campylobacter fetus subsp. fetus (strain 82-40), this protein is Small ribosomal subunit protein bS16.